A 131-amino-acid polypeptide reads, in one-letter code: D-ribose pyranase (131 aa).

The Proton donor role is filled by His-20. Residues Asp-28, His-98, and 120–122 each bind substrate; that span reads YAN.

Belongs to the RbsD / FucU family. RbsD subfamily. In terms of assembly, homodecamer.

The protein resides in the cytoplasm. The enzyme catalyses beta-D-ribopyranose = beta-D-ribofuranose. Its pathway is carbohydrate metabolism; D-ribose degradation; D-ribose 5-phosphate from beta-D-ribopyranose: step 1/2. In terms of biological role, catalyzes the interconversion of beta-pyran and beta-furan forms of D-ribose. This chain is D-ribose pyranase, found in Clostridium tetani (strain Massachusetts / E88).